Consider the following 457-residue polypeptide: Ribosomal protein uS12 methylthiotransferase RimO (457 aa).

The MTTase N-terminal domain maps to 9-128 (KKVHFISLGC…ILKNSDEGEK (120 aa)). Residues Cys-18, Cys-54, Cys-88, Cys-163, Cys-167, and Cys-170 each coordinate [4Fe-4S] cluster. Residues 149-384 (SQPGHRAYLK…MEVQQNISRE (236 aa)) enclose the Radical SAM core domain. The TRAM domain maps to 387 to 455 (SDFVGKTLQV…EYDLIGEIVV (69 aa)).

It belongs to the methylthiotransferase family. RimO subfamily. [4Fe-4S] cluster serves as cofactor.

The protein localises to the cytoplasm. The catalysed reaction is L-aspartate(89)-[ribosomal protein uS12]-hydrogen + (sulfur carrier)-SH + AH2 + 2 S-adenosyl-L-methionine = 3-methylsulfanyl-L-aspartate(89)-[ribosomal protein uS12]-hydrogen + (sulfur carrier)-H + 5'-deoxyadenosine + L-methionine + A + S-adenosyl-L-homocysteine + 2 H(+). In terms of biological role, catalyzes the methylthiolation of an aspartic acid residue of ribosomal protein uS12. This is Ribosomal protein uS12 methylthiotransferase RimO from Bdellovibrio bacteriovorus (strain ATCC 15356 / DSM 50701 / NCIMB 9529 / HD100).